A 228-amino-acid polypeptide reads, in one-letter code: Latherin (228 aa).

The first 20 residues, 1-20, serve as a signal peptide directing secretion; that stretch reads MLKVSCLFVLLCGLLVPSSA. Cysteine 153 and cysteine 196 are joined by a disulfide.

This sequence belongs to the BPI/LBP/Plunc superfamily. Plunc family. In terms of assembly, monomer. In terms of processing, no sign of N-X-[ST] acceptor site even though reported as N-glycosylated. As to expression, found in sweat (at protein level).

The protein resides in the secreted. Its function is as follows. Major protein in sweat, has surfactant properties. Has a role in temperature regulation by having a capacity to make hydrophobic surfaces wettable and so can function in promoting spreading and evaporation of sweat. The chain is Latherin (LATH) from Equus caballus (Horse).